Consider the following 221-residue polypeptide: Ependymin-1 (221 aa).

A signal peptide spans 1-21 (MQAFAVAALSIWLCLGATTLA). N-linked (GlcNAc...) asparagine glycosylation is found at N33, N73, and N97.

It belongs to the ependymin family. In terms of processing, binds calcium through the terminal sialic acids. EPDs are synthesized in the meninx and secreted in the cerebrospinal fluid.

It localises to the secreted. May play a role in neural plasticity. May be involved during axon regeneration. This Oncorhynchus mykiss (Rainbow trout) protein is Ependymin-1 (epd1).